The following is a 198-amino-acid chain: RxLR effector protein Htp1 (198 aa).

An N-terminal signal peptide occupies residues 1-23 (MRIHHPLTLAALCVVLHESLGAA). The RxLR signature appears at 46 to 49 (RHLR). 2 disordered regions span residues 48–101 (LRSD…TPMK) and 115–198 (TKNA…PTFD). An N-linked (GlcNAc...) asparagine glycan is attached at Asn-70. Residues 70-91 (NNSQEQATTGNSVETNQVPSTE) show a composition bias toward polar residues. The segment covering 126–137 (DDDDSDFSDDDV) has biased composition (acidic residues). Low complexity predominate over residues 173 to 191 (APTNAPTGTDAPTDAPTDA).

The protein belongs to the RxLR effector family. As to quaternary structure, interacts with the effector Htp3 within the host cells.

The protein localises to the secreted. It localises to the host cell. In terms of biological role, effector involved in the disease saprolegniosis in salmonids and other freshwater fish, resulting in considerable economic losses in aquaculture. Within the host fish cells, Htp1 is involved in the uptake of the S.parasitica effector Htp3 at a neutral pH (pH 7.5) and its release from vesicles into host cytosol where it degrades nucleic acids. This is RxLR effector protein Htp1 from Saprolegnia parasitica (strain CBS 223.65).